Consider the following 365-residue polypeptide: Chorismate synthase (365 aa).

Residue R48 participates in NADP(+) binding. FMN contacts are provided by residues 130–132 (RSS), 242–243 (NA), G290, 305–309 (KPTSS), and R331.

The protein belongs to the chorismate synthase family. As to quaternary structure, homotetramer. FMNH2 is required as a cofactor.

It catalyses the reaction 5-O-(1-carboxyvinyl)-3-phosphoshikimate = chorismate + phosphate. It participates in metabolic intermediate biosynthesis; chorismate biosynthesis; chorismate from D-erythrose 4-phosphate and phosphoenolpyruvate: step 7/7. Its function is as follows. Catalyzes the anti-1,4-elimination of the C-3 phosphate and the C-6 proR hydrogen from 5-enolpyruvylshikimate-3-phosphate (EPSP) to yield chorismate, which is the branch point compound that serves as the starting substrate for the three terminal pathways of aromatic amino acid biosynthesis. This reaction introduces a second double bond into the aromatic ring system. The protein is Chorismate synthase of Erythrobacter litoralis (strain HTCC2594).